A 301-amino-acid chain; its full sequence is Amine sulfotransferase (301 aa).

46–51 is a 3'-phosphoadenylyl sulfate binding site; it reads KSGTVW. Catalysis depends on H101, which acts as the Proton acceptor. 3'-phosphoadenylyl sulfate-binding positions include R123, S131, Y186, 220-225, and 252-254; these read ATFENM and RKG.

It belongs to the sulfotransferase 1 family. As to expression, expressed in male liver.

The protein resides in the cytoplasm. The catalysed reaction is a primary amine + 3'-phosphoadenylyl sulfate = a sulfamate + adenosine 3',5'-bisphosphate + 2 H(+). Functionally, sulfotransferase that utilizes 3'-phospho-5'-adenylyl sulfate (PAPS) as sulfonate donor to catalyze the N-sulfonation of amines (PTHP, aniline, 4-chloroaniline, 2-naphthylamine). This chain is Amine sulfotransferase (SULT3A1), found in Oryctolagus cuniculus (Rabbit).